The sequence spans 34 residues: Dermaseptin-H5 (34 aa).

As to expression, expressed by the skin glands.

The protein localises to the secreted. In terms of biological role, has antimicrobial activity. The polypeptide is Dermaseptin-H5 (Pithecopus hypochondrialis (Orange-legged leaf frog)).